The chain runs to 123 residues: Large ribosomal subunit protein bL19 (123 aa).

Belongs to the bacterial ribosomal protein bL19 family.

This protein is located at the 30S-50S ribosomal subunit interface and may play a role in the structure and function of the aminoacyl-tRNA binding site. The sequence is that of Large ribosomal subunit protein bL19 from Ruegeria sp. (strain TM1040) (Silicibacter sp.).